The primary structure comprises 432 residues: 3-phosphoshikimate 1-carboxyvinyltransferase (432 aa).

3 residues coordinate 3-phosphoshikimate: lysine 22, serine 23, and arginine 27. Lysine 22 contributes to the phosphoenolpyruvate binding site. Residues glycine 96 and arginine 127 each coordinate phosphoenolpyruvate. 7 residues coordinate 3-phosphoshikimate: serine 173, serine 174, glutamine 175, serine 201, aspartate 316, asparagine 339, and lysine 343. Residue glutamine 175 participates in phosphoenolpyruvate binding. The active-site Proton acceptor is aspartate 316. Phosphoenolpyruvate is bound by residues arginine 347, arginine 391, and lysine 416.

Belongs to the EPSP synthase family. As to quaternary structure, monomer.

The protein resides in the cytoplasm. The catalysed reaction is 3-phosphoshikimate + phosphoenolpyruvate = 5-O-(1-carboxyvinyl)-3-phosphoshikimate + phosphate. Its pathway is metabolic intermediate biosynthesis; chorismate biosynthesis; chorismate from D-erythrose 4-phosphate and phosphoenolpyruvate: step 6/7. Functionally, catalyzes the transfer of the enolpyruvyl moiety of phosphoenolpyruvate (PEP) to the 5-hydroxyl of shikimate-3-phosphate (S3P) to produce enolpyruvyl shikimate-3-phosphate and inorganic phosphate. This chain is 3-phosphoshikimate 1-carboxyvinyltransferase, found in Actinobacillus pleuropneumoniae serotype 7 (strain AP76).